Here is a 343-residue protein sequence, read N- to C-terminus: MEKVKVAVNGYGTIGKRVADAIRLQPDMELIGVGKTSPNYEAIIADKKGIKIYTVKDNIGKFEKSGIRVAGTIEDMVKEADIVVDTTPNGVGATYKPLYQSLGKNALFQGGEKADVADISFSALCNYDEAKGKKYIRVVSCNTTGMLRIICTMNKISKVEKVRATIVRRAADPKEVKRGPINSIVPDPASVPSHHAKDVLTVIKGIDIVTMAVIAPTTLMHLHTMVLTVKDKVNRDDIINTFLNTPRIILVNSSRTTVSSTAEIIEVSRDMGRVRYDIPEVVVFEDSIYTNGNEVFLMYGVHQESIVVPENIDAIRASLGLMGKEESIKVTNDTLGIMKGYLL.

Residues T13–I14 and G111 each bind NAD(+). S140 to N142 provides a ligand contact to D-glyceraldehyde 3-phosphate. C141 serves as the catalytic Nucleophile. R169 contacts NAD(+). H195–A196 lines the D-glyceraldehyde 3-phosphate pocket. Q303 provides a ligand contact to NAD(+).

Belongs to the glyceraldehyde-3-phosphate dehydrogenase family. Homotetramer.

It is found in the cytoplasm. It catalyses the reaction D-glyceraldehyde 3-phosphate + phosphate + NADP(+) = (2R)-3-phospho-glyceroyl phosphate + NADPH + H(+). The enzyme catalyses D-glyceraldehyde 3-phosphate + phosphate + NAD(+) = (2R)-3-phospho-glyceroyl phosphate + NADH + H(+). It functions in the pathway carbohydrate degradation; glycolysis; pyruvate from D-glyceraldehyde 3-phosphate: step 1/5. This is Glyceraldehyde-3-phosphate dehydrogenase from Sulfurisphaera tokodaii (strain DSM 16993 / JCM 10545 / NBRC 100140 / 7) (Sulfolobus tokodaii).